The following is an 88-amino-acid chain: MLGVQAQMPAPGQWTTPPFDPRFPNQNQTRNCYQNFLDYHRCVKTMDRRGKNTQACDYYFRVFHSLCPVSWVQRWNEQIKQGTFPGKI.

The tract at residues 1–21 (MLGVQAQMPAPGQWTTPPFDP) is disordered. Residues 29–75 (TRNCYQNFLDYHRCVKTMDRRGKNTQACDYYFRVFHSLCPVSWVQRW) enclose the CHCH domain. The short motif at 32–42 (CYQNFLDYHRC) is the Cx9C motif element. 2 disulfides stabilise this stretch: Cys-32-Cys-67 and Cys-42-Cys-56. Residues 56-67 (CDYYFRVFHSLC) carry the Cx10C motif motif.

It belongs to the cytochrome c oxidase subunit 6B family. In terms of assembly, component of the cytochrome c oxidase (complex IV, CIV), a multisubunit enzyme composed of 14 subunits. The complex is composed of a catalytic core of 3 subunits MT-CO1, MT-CO2 and MT-CO3, encoded in the mitochondrial DNA, and 11 supernumerary subunits COX4I, COX5A, COX5B, COX6A, COX6B, COX6C, COX7A, COX7B, COX7C, COX8 and NDUFA4, which are encoded in the nuclear genome. The complex exists as a monomer or a dimer and forms supercomplexes (SCs) in the inner mitochondrial membrane with NADH-ubiquinone oxidoreductase (complex I, CI) and ubiquinol-cytochrome c oxidoreductase (cytochrome b-c1 complex, complex III, CIII), resulting in different assemblies (supercomplex SCI(1)III(2)IV(1) and megacomplex MCI(2)III(2)IV(2)). In terms of tissue distribution, testis specific.

The protein localises to the mitochondrion inner membrane. It functions in the pathway energy metabolism; oxidative phosphorylation. Functionally, component of the cytochrome c oxidase, the last enzyme in the mitochondrial electron transport chain which drives oxidative phosphorylation. The respiratory chain contains 3 multisubunit complexes succinate dehydrogenase (complex II, CII), ubiquinol-cytochrome c oxidoreductase (cytochrome b-c1 complex, complex III, CIII) and cytochrome c oxidase (complex IV, CIV), that cooperate to transfer electrons derived from NADH and succinate to molecular oxygen, creating an electrochemical gradient over the inner membrane that drives transmembrane transport and the ATP synthase. Cytochrome c oxidase is the component of the respiratory chain that catalyzes the reduction of oxygen to water. Electrons originating from reduced cytochrome c in the intermembrane space (IMS) are transferred via the dinuclear copper A center (CU(A)) of subunit 2 and heme A of subunit 1 to the active site in subunit 1, a binuclear center (BNC) formed by heme A3 and copper B (CU(B)). The BNC reduces molecular oxygen to 2 water molecules using 4 electrons from cytochrome c in the IMS and 4 protons from the mitochondrial matrix. The protein is Cytochrome c oxidase subunit 6B2 (Cox6b2) of Rattus norvegicus (Rat).